Here is a 171-residue protein sequence, read N- to C-terminus: Early E1A protein (171 aa).

The interval 40 to 48 (PTLHDLFDV) is interaction with RB1 in competition with E2F1. Positions 67-96 (DTDSSASTEGDSGFSPLSTPPVSPIPPHPT) are disordered. The span at 84-96 (STPPVSPIPPHPT) shows a compositional bias: pro residues. The LXCXE motif, interaction with host RB1 signature appears at 106–110 (LLCLE). A zinc finger spans residues 145-163 (CLRCAFYQEQDDNALCGLC). Positions 166 to 171 (KGPCRR) match the Nuclear localization signal motif.

It belongs to the adenoviridae E1A protein family. As to quaternary structure, interacts with host UBE2I; this interaction interferes with polySUMOylation. Interacts with host RB1; this interaction induces the aberrant dissociation of RB1-E2F1 complex thereby disrupting the activity of RB1 and activating E2F1-regulated genes. Interacts with host ATF7; the interaction enhances ATF7-mediated viral transactivation activity which requires the zinc binding domains of both proteins. Isoform early E1A 32 kDa protein and isoform early E1A 26 kDa protein interact (via N-terminus) with CUL1 and E3 ubiquitin ligase RBX1; these interactions inhibit RBX1-CUL1-dependent elongation reaction of ubiquitin chains and attenuate ubiquitination of SCF(FBXW7) target proteins. Interacts (via PXLXP motif) with host ZMYND11/BS69 (via MYND-type zinc finger); this interaction inhibits E1A mediated transactivation. Interacts with host EP300; this interaction stimulates the acetylation of RB1 by recruiting EP300 and RB1 into a multimeric-protein complex. Interacts with host CTBP1 and CTBP2; this interaction seems to potentiate viral replication. Interacts with host DCAF7. Interacts with host DYRK1A. Interacts with host KPNA4; this interaction allows E1A import into the host nucleus. Interacts with host EP400; this interaction stabilizes MYC. Interacts with host TBP protein; this interaction probably disrupts the TBP-TATA complex.

Its subcellular location is the host nucleus. Plays a role in viral genome replication by driving entry of quiescent cells into the cell cycle. Stimulation of progression from G1 to S phase allows the virus to efficiently use the cellular DNA replicating machinery to achieve viral genome replication. E1A protein has both transforming and trans-activating activities. Induces the disassembly of the E2F1 transcription factor from RB1 by direct competition for the same binding site on RB1, with subsequent transcriptional activation of E2F1-regulated S-phase genes and of the E2 region of the adenoviral genome. Release of E2F1 leads to the ARF-mediated inhibition of MDM2 and causes TP53/p53 to accumulate because it is not targeted for degradation by MDM2-mediated ubiquitination anymore. This increase in TP53, in turn, would arrest the cell proliferation and direct its death but this effect is counteracted by the viral protein E1B-55K. Inactivation of the ability of RB1 to arrest the cell cycle is critical for cellular transformation, uncontrolled cellular growth and proliferation induced by viral infection. Interaction with RBX1 and CUL1 inhibits ubiquitination of the proteins targeted by SCF(FBXW7) ubiquitin ligase complex, and may be linked to unregulated host cell proliferation. The tumorigenesis-restraining activity of E1A may be related to the disruption of the host CtBP-CtIP complex through the CtBP binding motif. The chain is Early E1A protein from Canis lupus familiaris (Dog).